Reading from the N-terminus, the 170-residue chain is Putative pre-16S rRNA nuclease (170 aa).

The tract at residues 1–29 is disordered; the sequence is MVAASHRSPDRPGDPEGLEPGTGRGRRLG.

This sequence belongs to the YqgF nuclease family.

It is found in the cytoplasm. Functionally, could be a nuclease involved in processing of the 5'-end of pre-16S rRNA. In Mycobacterium ulcerans (strain Agy99), this protein is Putative pre-16S rRNA nuclease.